A 126-amino-acid polypeptide reads, in one-letter code: Hydrogenase maturation factor HypA (126 aa).

Residue His-2 participates in Ni(2+) binding. Zn(2+) is bound by residues Cys-78, Cys-81, Cys-97, and Cys-100.

This sequence belongs to the HypA/HybF family.

Functionally, involved in the maturation of [NiFe] hydrogenases. Required for nickel insertion into the metal center of the hydrogenase. The protein is Hydrogenase maturation factor HypA of Methanococcus maripaludis (strain C7 / ATCC BAA-1331).